The sequence spans 91 residues: Probable Fe(2+)-trafficking protein (91 aa).

Belongs to the Fe(2+)-trafficking protein family. In terms of assembly, monomer.

In terms of biological role, could be a mediator in iron transactions between iron acquisition and iron-requiring processes, such as synthesis and/or repair of Fe-S clusters in biosynthetic enzymes. This chain is Probable Fe(2+)-trafficking protein, found in Salmonella agona (strain SL483).